The chain runs to 455 residues: ATP-dependent protease ATPase subunit HslU (455 aa).

Residues valine 23, 65–70 (GVGKTE), aspartate 266, glutamate 333, and arginine 405 each bind ATP.

It belongs to the ClpX chaperone family. HslU subfamily. A double ring-shaped homohexamer of HslV is capped on each side by a ring-shaped HslU homohexamer. The assembly of the HslU/HslV complex is dependent on binding of ATP.

It localises to the cytoplasm. ATPase subunit of a proteasome-like degradation complex; this subunit has chaperone activity. The binding of ATP and its subsequent hydrolysis by HslU are essential for unfolding of protein substrates subsequently hydrolyzed by HslV. HslU recognizes the N-terminal part of its protein substrates and unfolds these before they are guided to HslV for hydrolysis. In Xanthomonas axonopodis pv. citri (strain 306), this protein is ATP-dependent protease ATPase subunit HslU.